Here is a 128-residue protein sequence, read N- to C-terminus: Fluoride-specific ion channel FluC (128 aa).

The next 4 helical transmembrane spans lie at 1 to 21 (MPER…GATA), 45 to 65 (LAGC…SLVS), 70 to 90 (LLLA…MYEI), and 99 to 119 (IFYS…CLYF). Positions 78 and 81 each coordinate Na(+).

This sequence belongs to the fluoride channel Fluc/FEX (TC 1.A.43) family.

Its subcellular location is the cell inner membrane. It carries out the reaction fluoride(in) = fluoride(out). Na(+) is not transported, but it plays an essential structural role and its presence is essential for fluoride channel function. In terms of biological role, fluoride-specific ion channel. Important for reducing fluoride concentration in the cell, thus reducing its toxicity. The polypeptide is Fluoride-specific ion channel FluC (Chlorobium phaeobacteroides (strain BS1)).